Reading from the N-terminus, the 782-residue chain is ATP-dependent 6-phosphofructokinase, muscle type (782 aa).

Residue T2 is modified to N-acetylthreonine. An N-terminal catalytic PFK domain 1 region spans residues 2–390; that stretch reads THEEHHAAKT…NWEVYKLLAH (389 aa). Residues G25, 88 to 89, and 118 to 121 each bind ATP; these read RC and GDGS. Residue D119 coordinates Mg(2+). S133 carries the post-translational modification Phosphoserine. Residues 164–166, R201, 208–210, E264, R292, and 298–301 contribute to the substrate site; these read SID, MGR, and HVQR. D166 serves as the catalytic Proton acceptor. Residue S377 is modified to Phosphoserine. The tract at residues 391-403 is interdomain linker; sequence IRPPVSKTSATMH. The interval 404–782 is C-terminal regulatory PFK domain 2; that stretch reads TVAVMNVGAP…SRKRSGETSI (379 aa). Residues R473 and 530 to 534 each bind beta-D-fructose 2,6-bisphosphate; that span reads TVSNN. O-linked (GlcNAc) serine glycosylation occurs at S532. K559 carries the N6-(2-hydroxyisobutyryl)lysine modification. Beta-D-fructose 2,6-bisphosphate-binding positions include R568, 575–577, E631, R657, and 663–666; these read MGG and HMQQ. Phosphoserine is present on S669. Residue R737 coordinates beta-D-fructose 2,6-bisphosphate. The residue at position 777 (S777) is a Phosphoserine.

The protein belongs to the phosphofructokinase type A (PFKA) family. ATP-dependent PFK group I subfamily. Eukaryotic two domain clade 'E' sub-subfamily. Homo- and heterotetramers. Phosphofructokinase (PFK) enzyme functions as a tetramer composed of different combinations of 3 types of subunits, called PFKM (M), PFKL (L) and PFKP (P). The composition of the PFK tetramer differs according to the tissue type it is present in. The kinetic and regulatory properties of the tetrameric enzyme are dependent on the subunit composition, hence can vary across tissues. Interacts (via C-terminus) with HK1 (via N-terminal spermatogenic cell-specific region). Requires Mg(2+) as cofactor. Post-translationally, glcNAcylation decreases enzyme activity.

The protein resides in the cytoplasm. It catalyses the reaction beta-D-fructose 6-phosphate + ATP = beta-D-fructose 1,6-bisphosphate + ADP + H(+). Its pathway is carbohydrate degradation; glycolysis; D-glyceraldehyde 3-phosphate and glycerone phosphate from D-glucose: step 3/4. With respect to regulation, allosterically activated by ADP, AMP, or fructose 2,6-bisphosphate, and allosterically inhibited by ATP or citrate. In terms of biological role, catalyzes the phosphorylation of D-fructose 6-phosphate to fructose 1,6-bisphosphate by ATP, the first committing step of glycolysis. The protein is ATP-dependent 6-phosphofructokinase, muscle type (PFKM) of Canis lupus familiaris (Dog).